A 170-amino-acid polypeptide reads, in one-letter code: Ureidoglycolate lyase (170 aa).

It belongs to the ureidoglycolate lyase family. In terms of assembly, homodimer. Requires Ni(2+) as cofactor.

It carries out the reaction (S)-ureidoglycolate = urea + glyoxylate. Its pathway is nitrogen metabolism; (S)-allantoin degradation. Catalyzes the catabolism of the allantoin degradation intermediate (S)-ureidoglycolate, generating urea and glyoxylate. Involved in the utilization of allantoin as nitrogen source. This is Ureidoglycolate lyase from Pseudomonas savastanoi pv. phaseolicola (strain 1448A / Race 6) (Pseudomonas syringae pv. phaseolicola (strain 1448A / Race 6)).